Here is a 224-residue protein sequence, read N- to C-terminus: tRNA (guanine-N(7)-)-methyltransferase (224 aa).

Residues E54, E79, D106, and D129 each coordinate S-adenosyl-L-methionine. The active site involves D129. Residues K133 and D165 each contribute to the substrate site.

This sequence belongs to the class I-like SAM-binding methyltransferase superfamily. TrmB family.

The enzyme catalyses guanosine(46) in tRNA + S-adenosyl-L-methionine = N(7)-methylguanosine(46) in tRNA + S-adenosyl-L-homocysteine. It functions in the pathway tRNA modification; N(7)-methylguanine-tRNA biosynthesis. Its function is as follows. Catalyzes the formation of N(7)-methylguanine at position 46 (m7G46) in tRNA. The polypeptide is tRNA (guanine-N(7)-)-methyltransferase (Chlamydia felis (strain Fe/C-56) (Chlamydophila felis)).